The sequence spans 290 residues: Phosphoribosylaminoimidazole-succinocarboxamide synthase (290 aa).

This sequence belongs to the SAICAR synthetase family.

It catalyses the reaction 5-amino-1-(5-phospho-D-ribosyl)imidazole-4-carboxylate + L-aspartate + ATP = (2S)-2-[5-amino-1-(5-phospho-beta-D-ribosyl)imidazole-4-carboxamido]succinate + ADP + phosphate + 2 H(+). The protein operates within purine metabolism; IMP biosynthesis via de novo pathway; 5-amino-1-(5-phospho-D-ribosyl)imidazole-4-carboxamide from 5-amino-1-(5-phospho-D-ribosyl)imidazole-4-carboxylate: step 1/2. The sequence is that of Phosphoribosylaminoimidazole-succinocarboxamide synthase from Haemophilus influenzae (strain PittEE).